The chain runs to 316 residues: Homoserine kinase (316 aa).

An ATP-binding site is contributed by 97-107 (PPARGLGSSAS).

Belongs to the GHMP kinase family. Homoserine kinase subfamily.

Its subcellular location is the cytoplasm. The enzyme catalyses L-homoserine + ATP = O-phospho-L-homoserine + ADP + H(+). It participates in amino-acid biosynthesis; L-threonine biosynthesis; L-threonine from L-aspartate: step 4/5. Its function is as follows. Catalyzes the ATP-dependent phosphorylation of L-homoserine to L-homoserine phosphate. The sequence is that of Homoserine kinase from Prochlorococcus marinus (strain MIT 9303).